A 208-amino-acid polypeptide reads, in one-letter code: Protein GrpE (208 aa).

The segment covering 1–25 (MVDNKDFNEELKESIQEELDNETKS) has biased composition (basic and acidic residues). A disordered region spans residues 1–38 (MVDNKDFNEELKESIQEELDNETKSENPNIDEEVEEVS). Over residues 29-38 (NIDEEVEEVS) the composition is skewed to acidic residues.

This sequence belongs to the GrpE family. As to quaternary structure, homodimer.

It is found in the cytoplasm. Its function is as follows. Participates actively in the response to hyperosmotic and heat shock by preventing the aggregation of stress-denatured proteins, in association with DnaK and GrpE. It is the nucleotide exchange factor for DnaK and may function as a thermosensor. Unfolded proteins bind initially to DnaJ; upon interaction with the DnaJ-bound protein, DnaK hydrolyzes its bound ATP, resulting in the formation of a stable complex. GrpE releases ADP from DnaK; ATP binding to DnaK triggers the release of the substrate protein, thus completing the reaction cycle. Several rounds of ATP-dependent interactions between DnaJ, DnaK and GrpE are required for fully efficient folding. In Clostridium perfringens (strain SM101 / Type A), this protein is Protein GrpE.